Reading from the N-terminus, the 279-residue chain is MAVNVDAEYLKEIEKTRRDLRALISSRNCAPIMLRLAWHDAGTYDAKKKTGGANGSIRFKEELNRPHNKGLEKAVAFCEEVKAKHPRVSYADLYQLAGVVAVEVTGGPAIPFTPGRKDADSADDGELPNPNEGASHLRTLFSRMGLLDRDIVALSGGHTLGRAHKERSDFEGPWTQDPLKFDNSYFVELLKGETPGLLQLKTDKALLDDPKFHPFVKLYAKDEDMFFKAYAISHKKLSELGFNPPRRIPSAVTQQTLGIAVAAAVVIFTICYEASRRGK.

The active-site Proton acceptor is the His-39. Residues 111 to 134 form a disordered region; the sequence is PFTPGRKDADSADDGELPNPNEGA. Residue His-158 participates in heme b binding. K(+)-binding residues include Thr-159, Thr-175, and Asp-182. The helical transmembrane segment at 251–271 threads the bilayer; that stretch reads AVTQQTLGIAVAAAVVIFTIC. The short motif at 272–279 is the AKR2A-binding sequence (ABS) required for peroxisome membrane targeting element; the sequence is YEASRRGK.

Belongs to the peroxidase family. Ascorbate peroxidase subfamily. As to quaternary structure, interacts with AKR2A and AKR2B. Requires heme b as cofactor.

Its subcellular location is the peroxisome membrane. The catalysed reaction is L-ascorbate + H2O2 = L-dehydroascorbate + 2 H2O. Plays a key role in hydrogen peroxide removal. The sequence is that of L-ascorbate peroxidase 5, peroxisomal (APX5) from Arabidopsis thaliana (Mouse-ear cress).